The chain runs to 263 residues: Isoprenyl transferase (263 aa).

Aspartate 26 is an active-site residue. Aspartate 26 lines the Mg(2+) pocket. Substrate-binding positions include 27–30 (GNGR), tryptophan 31, arginine 39, histidine 43, and 71–73 (SSE). The active-site Proton acceptor is the asparagine 74. Residues tryptophan 75, arginine 77, arginine 191, and 197 to 199 (RIS) contribute to the substrate site. Glutamate 210 is a binding site for Mg(2+). A disordered region spans residues 241-263 (GRTSEQIAGQQENKNTVSNEDRV). Over residues 243–263 (TSEQIAGQQENKNTVSNEDRV) the composition is skewed to polar residues.

It belongs to the UPP synthase family. Homodimer. Mg(2+) is required as a cofactor.

Catalyzes the condensation of isopentenyl diphosphate (IPP) with allylic pyrophosphates generating different type of terpenoids. The chain is Isoprenyl transferase from Nitrosomonas europaea (strain ATCC 19718 / CIP 103999 / KCTC 2705 / NBRC 14298).